Consider the following 259-residue polypeptide: Thiazole synthase (259 aa).

Catalysis depends on Lys102, which acts as the Schiff-base intermediate with DXP. 1-deoxy-D-xylulose 5-phosphate contacts are provided by residues Gly163, 189–190, and 211–212; these read AG and NT.

The protein belongs to the ThiG family. In terms of assembly, homotetramer. Forms heterodimers with either ThiH or ThiS.

The protein resides in the cytoplasm. It catalyses the reaction [ThiS sulfur-carrier protein]-C-terminal-Gly-aminoethanethioate + 2-iminoacetate + 1-deoxy-D-xylulose 5-phosphate = [ThiS sulfur-carrier protein]-C-terminal Gly-Gly + 2-[(2R,5Z)-2-carboxy-4-methylthiazol-5(2H)-ylidene]ethyl phosphate + 2 H2O + H(+). Its pathway is cofactor biosynthesis; thiamine diphosphate biosynthesis. In terms of biological role, catalyzes the rearrangement of 1-deoxy-D-xylulose 5-phosphate (DXP) to produce the thiazole phosphate moiety of thiamine. Sulfur is provided by the thiocarboxylate moiety of the carrier protein ThiS. In vitro, sulfur can be provided by H(2)S. This Novosphingobium aromaticivorans (strain ATCC 700278 / DSM 12444 / CCUG 56034 / CIP 105152 / NBRC 16084 / F199) protein is Thiazole synthase.